The following is a 109-amino-acid chain: Protein reprimo (109 aa).

Residues N7 and N18 are each glycosylated (N-linked (GlcNAc...) asparagine). Residues 56–76 (VVQIAVMCVLSLTVVFGIFFL) form a helical membrane-spanning segment. Residue S98 is modified to Phosphoserine.

The protein belongs to the reprimo family.

It localises to the cytoplasm. It is found in the membrane. May be involved in the regulation of p53-dependent G2 arrest of the cell cycle. Seems to induce cell cycle arrest by inhibiting CDK1 activity and nuclear translocation of the CDC2 cyclin B1 complex. The protein is Protein reprimo (Rprm) of Rattus norvegicus (Rat).